Consider the following 216-residue polypeptide: 3-keto-L-gulonate-6-phosphate decarboxylase UlaD (216 aa).

Aspartate 11 serves as a coordination point for substrate. Residues glutamate 33 and aspartate 62 each coordinate Mg(2+). Residue arginine 192 coordinates substrate.

The protein belongs to the HPS/KGPDC family. KGPDC subfamily. In terms of assembly, homodimer. It depends on Mg(2+) as a cofactor.

It catalyses the reaction 3-dehydro-L-gulonate 6-phosphate + H(+) = L-xylulose 5-phosphate + CO2. Its pathway is cofactor degradation; L-ascorbate degradation; D-xylulose 5-phosphate from L-ascorbate: step 2/4. Catalyzes the decarboxylation of 3-keto-L-gulonate-6-P into L-xylulose-5-P. Is involved in the anaerobic L-ascorbate utilization. The protein is 3-keto-L-gulonate-6-phosphate decarboxylase UlaD of Shigella dysenteriae serotype 1 (strain Sd197).